Reading from the N-terminus, the 361-residue chain is Probable mannose-1-phosphate guanylyltransferase 2 (361 aa).

L6 and V7 together coordinate GDP-alpha-D-mannose. G9, G11, T12, R13, and K23 together coordinate diphosphate. G85, N109, D111, G146, and N173 together coordinate GDP-alpha-D-mannose.

Belongs to the transferase hexapeptide repeat family.

It catalyses the reaction alpha-D-mannose 1-phosphate + GTP + H(+) = GDP-alpha-D-mannose + diphosphate. It functions in the pathway nucleotide-sugar biosynthesis; GDP-alpha-D-mannose biosynthesis; GDP-alpha-D-mannose from alpha-D-mannose 1-phosphate (GTP route): step 1/1. Functionally, catalyzes a reaction of the Smirnoff-Wheeler pathway, the major route to ascorbate biosynthesis in plants. The polypeptide is Probable mannose-1-phosphate guanylyltransferase 2 (Oryza sativa subsp. japonica (Rice)).